The chain runs to 692 residues: Formate hydrogenlyase transcriptional activator (692 aa).

One can recognise a GAF domain in the interval 202–344 (DIDELVSEVA…QIAERVAIAV (143 aa)). In terms of domain architecture, Sigma-54 factor interaction spans 381–610 (IIGRSEAMYN…LENVVERAVL (230 aa)). ATP contacts are provided by residues 409–416 (GETGTGKE) and 472–481 (ADKSSLFLDE). Positions 663–682 (PKGAAQRLGLKRTTLLSRMK) form a DNA-binding region, H-T-H motif.

Required for induction of expression of the formate dehydrogenase H and hydrogenase-3 structural genes. This Salmonella typhimurium (strain LT2 / SGSC1412 / ATCC 700720) protein is Formate hydrogenlyase transcriptional activator (fhlA).